The chain runs to 255 residues: Proteasome subunit alpha type-3 (255 aa).

Ser-2 carries the N-acetylserine modification. 3 positions are modified to N6-acetyllysine: Lys-57, Lys-206, and Lys-230. Phosphoserine is present on residues Ser-243 and Ser-250.

Belongs to the peptidase T1A family. The 26S proteasome consists of a 20S proteasome core and two 19S regulatory subunits. The 20S proteasome core is a barrel-shaped complex made of 28 subunits that are arranged in four stacked rings. The two outer rings are each formed by seven alpha subunits, and the two inner rings are formed by seven beta subunits. The proteolytic activity is exerted by three beta-subunits PSMB5, PSMB6 and PSMB7. Interacts with AURKB. Interacts with CDKN1A. Interacts with MDM2 and RB1. Interacts with the C-terminus of TBXA2R isoform 2. Interacts with DNAJB2. As to expression, detected in liver (at protein level).

The protein resides in the cytoplasm. It localises to the nucleus. Its function is as follows. Component of the 20S core proteasome complex involved in the proteolytic degradation of most intracellular proteins. This complex plays numerous essential roles within the cell by associating with different regulatory particles. Associated with two 19S regulatory particles, forms the 26S proteasome and thus participates in the ATP-dependent degradation of ubiquitinated proteins. The 26S proteasome plays a key role in the maintenance of protein homeostasis by removing misfolded or damaged proteins that could impair cellular functions, and by removing proteins whose functions are no longer required. Associated with the PA200 or PA28, the 20S proteasome mediates ubiquitin-independent protein degradation. This type of proteolysis is required in several pathways including spermatogenesis (20S-PA200 complex) or generation of a subset of MHC class I-presented antigenic peptides (20S-PA28 complex). Binds to the C-terminus of CDKN1A and thereby mediates its degradation. Negatively regulates the membrane trafficking of the cell-surface thromboxane A2 receptor (TBXA2R) isoform 2. This is Proteasome subunit alpha type-3 (Psma3) from Mus musculus (Mouse).